The primary structure comprises 362 residues: 3-isopropylmalate dehydrogenase (362 aa).

An NAD(+)-binding site is contributed by 76–87 (GPKWGTGSVRPE). Substrate is bound by residues Arg-94, Arg-104, Arg-133, and Asp-222. Residues Asp-222, Asp-247, and Asp-251 each contribute to the Mg(2+) site. Position 286 to 297 (286 to 297 (GSAPDLGPGKVN)) interacts with NAD(+).

This sequence belongs to the isocitrate and isopropylmalate dehydrogenases family. Homodimer. Requires Mg(2+) as cofactor. Mn(2+) is required as a cofactor.

It localises to the cytoplasm. It catalyses the reaction (2R,3S)-3-isopropylmalate + NAD(+) = 4-methyl-2-oxopentanoate + CO2 + NADH. It participates in amino-acid biosynthesis; L-leucine biosynthesis; L-leucine from 3-methyl-2-oxobutanoate: step 3/4. Catalyzes the oxidation of 3-carboxy-2-hydroxy-4-methylpentanoate (3-isopropylmalate) to 3-carboxy-4-methyl-2-oxopentanoate. The product decarboxylates to 4-methyl-2 oxopentanoate. This is 3-isopropylmalate dehydrogenase (LEU2) from Pichia angusta (Yeast).